The following is a 142-amino-acid chain: Large ribosomal subunit protein uL13 (142 aa).

Belongs to the universal ribosomal protein uL13 family. Part of the 50S ribosomal subunit.

This protein is one of the early assembly proteins of the 50S ribosomal subunit, although it is not seen to bind rRNA by itself. It is important during the early stages of 50S assembly. The protein is Large ribosomal subunit protein uL13 of Teredinibacter turnerae (strain ATCC 39867 / T7901).